The chain runs to 73 residues: MKFYIVFCLFVVLLINFAAAEETEEPIRHAKKNPSEGECKKACADAFANGDQSKIAKAENFKDYYCNCHIIIH.

The first 20 residues, 1–20 (MKFYIVFCLFVVLLINFAAA), serve as a signal peptide directing secretion. Cystine bridges form between C39-C66 and C43-C68.

It belongs to the scoloptoxin-15 family. Expressed by the venom gland.

The protein localises to the secreted. Functionally, activity unknown, even that a lot of targets (Kv, Nav, Cav) have been tested and activities on insects and mice have been tested. The sequence is that of U-scoloptoxin(15)-Sm2a from Scolopendra morsitans (Tanzanian blue ringleg centipede).